We begin with the raw amino-acid sequence, 199 residues long: Urease accessory protein UreG (199 aa).

GTP is bound at residue 8-15 (GPVGSGKT).

The protein belongs to the SIMIBI class G3E GTPase family. UreG subfamily. Homodimer. UreH, UreF and UreG form a complex that acts as a GTP-hydrolysis-dependent molecular chaperone, activating the urease apoprotein by helping to assemble the nickel containing metallocenter of UreC. The UreE protein probably delivers the nickel.

It is found in the cytoplasm. Facilitates the functional incorporation of the urease nickel metallocenter. This process requires GTP hydrolysis, probably effectuated by UreG. The protein is Urease accessory protein UreG of Helicobacter pylori (strain G27).